Here is a 142-residue protein sequence, read N- to C-terminus: Hemoglobin subunit beta-C (142 aa).

The region spanning 1–142 (MPNKALITGF…VASALAHRYH (142 aa)) is the Globin domain. H59 and H88 together coordinate heme b.

Belongs to the globin family. Heterotetramer of two alpha chains and two beta chains. Red blood cells.

Its function is as follows. Involved in oxygen transport from the lung to the various peripheral tissues. The chain is Hemoglobin subunit beta-C (HBBC) from Capra hircus (Goat).